The chain runs to 81 residues: MDATVSAASVIAAALAVGLAAIGPGIGQGTAAGQAVEGIARQPEVDGKIRGTLLLSLAFMEALTIYGLVVALALLFANPFV.

Helical transmembrane passes span 7-27 (AASVIAAALAVGLAAIGPGIG) and 57-77 (LAFMEALTIYGLVVALALLFA).

This sequence belongs to the ATPase C chain family. As to quaternary structure, F-type ATPases have 2 components, F(1) - the catalytic core - and F(0) - the membrane proton channel. F(1) has five subunits: alpha(3), beta(3), gamma(1), delta(1), epsilon(1). F(0) has four main subunits: a(1), b(1), b'(1) and c(10-14). The alpha and beta chains form an alternating ring which encloses part of the gamma chain. F(1) is attached to F(0) by a central stalk formed by the gamma and epsilon chains, while a peripheral stalk is formed by the delta, b and b' chains.

The protein localises to the plastid. The protein resides in the cyanelle thylakoid membrane. Its function is as follows. F(1)F(0) ATP synthase produces ATP from ADP in the presence of a proton or sodium gradient. F-type ATPases consist of two structural domains, F(1) containing the extramembraneous catalytic core and F(0) containing the membrane proton channel, linked together by a central stalk and a peripheral stalk. During catalysis, ATP synthesis in the catalytic domain of F(1) is coupled via a rotary mechanism of the central stalk subunits to proton translocation. Key component of the F(0) channel; it plays a direct role in translocation across the membrane. A homomeric c-ring of between 10-14 subunits forms the central stalk rotor element with the F(1) delta and epsilon subunits. The protein is ATP synthase subunit C, cyanelle of Cyanophora paradoxa.